Consider the following 701-residue polypeptide: Polyphosphate kinase (701 aa).

N45 serves as a coordination point for ATP. 2 residues coordinate Mg(2+): R373 and R403. Residues 428-462 (PGMKIHAKLLLITRKEGDEFVRYAHIGTGNFHERT) form the PLD phosphodiesterase 1 domain. The Phosphohistidine intermediate role is filled by H433. ATP is bound by residues Y466, R562, and H590. Residues 585–615 (DRFLEHPRVLVVHNDGNPQVFISSADWMERN) form the PLD phosphodiesterase 2 domain.

This sequence belongs to the polyphosphate kinase 1 (PPK1) family. Requires Mg(2+) as cofactor. Post-translationally, an intermediate of this reaction is the autophosphorylated ppk in which a phosphate is covalently linked to a histidine residue through a N-P bond.

The catalysed reaction is [phosphate](n) + ATP = [phosphate](n+1) + ADP. Its function is as follows. Catalyzes the reversible transfer of the terminal phosphate of ATP to form a long-chain polyphosphate (polyP). The protein is Polyphosphate kinase of Vibrio cholerae serotype O1 (strain ATCC 39315 / El Tor Inaba N16961).